A 206-amino-acid polypeptide reads, in one-letter code: LexA repressor (206 aa).

Positions 28-48 (VREIGQAVGLASSSTVHGHLS) form a DNA-binding region, H-T-H motif. Active-site for autocatalytic cleavage activity residues include Ser-128 and Lys-166.

Belongs to the peptidase S24 family. In terms of assembly, homodimer.

The catalysed reaction is Hydrolysis of Ala-|-Gly bond in repressor LexA.. Its function is as follows. Represses a number of genes involved in the response to DNA damage (SOS response), including recA and lexA. In the presence of single-stranded DNA, RecA interacts with LexA causing an autocatalytic cleavage which disrupts the DNA-binding part of LexA, leading to derepression of the SOS regulon and eventually DNA repair. This Bacillus thuringiensis (strain Al Hakam) protein is LexA repressor.